A 559-amino-acid chain; its full sequence is Glucose-6-phosphate isomerase (559 aa).

Glu363 functions as the Proton donor in the catalytic mechanism. Catalysis depends on residues His394 and Lys523.

This sequence belongs to the GPI family.

It is found in the cytoplasm. The catalysed reaction is alpha-D-glucose 6-phosphate = beta-D-fructose 6-phosphate. Its pathway is carbohydrate biosynthesis; gluconeogenesis. It participates in carbohydrate degradation; glycolysis; D-glyceraldehyde 3-phosphate and glycerone phosphate from D-glucose: step 2/4. Catalyzes the reversible isomerization of glucose-6-phosphate to fructose-6-phosphate. The chain is Glucose-6-phosphate isomerase from Bartonella quintana (strain Toulouse) (Rochalimaea quintana).